The chain runs to 364 residues: Trans-enoyl reductase sthE (364 aa).

Residue 51–54 (TDYK) coordinates NADP(+). 137-144 (WGTAALAI) is a substrate binding site. Residues 172–175 (ATAT), 195–198 (SESS), Tyr213, and 261–262 (LE) each bind NADP(+). 281–285 (GFEGQ) contributes to the substrate binding site. Residue 351 to 352 (VK) participates in NADP(+) binding.

Belongs to the zinc-containing alcohol dehydrogenase family. Monomer.

It carries out the reaction 7 malonyl-CoA + acetyl-CoA + 10 AH2 + 5 S-adenosyl-L-methionine + 2 H(+) = dehydroprobetaenone I + 10 A + 5 S-adenosyl-L-homocysteine + 7 CO2 + 8 CoA + 6 H2O. It participates in mycotoxin biosynthesis. Functionally, trans-enoyl reductase; part of the gene cluster that mediates the biosynthesis of the phytotoxin stemphyloxin II. The first step of the pathway is the synthesis of dehydroprobetaenone I by the polyketide synthase sthA and the enoyl reductase sthE via condensation of one acetyl-CoA starter unit with 7 malonyl-CoA units and 5 methylations. The C-terminal reductase (R) domain of sthA catalyzes the reductive release of the polyketide chain. Because sthA lacks a designated enoylreductase (ER) domain, the required activity is provided the enoyl reductase sthE. The short-chain dehydrogenase/reductase sthC then catalyzes reduction of dehydroprobetaenone I to probetaenone I. The cytochrome P450 monooxygenase sthF catalyzes successive epoxidation, oxidation (resulting from epoxide opening) and hydroxylation to install a tertiary alcohol in the decaline ring to yield betaenone C from dehydroprobetaenone I and betaenone B from probetaenone I. The FAD-linked oxidoreductase sthB is responsible for the conversion of betaenone C to betaenone A via an intramolecular aldol reaction between C-1 and C-17 to form the bridged tricyclic system in betaenone A. Finally, the cytochrome P450 monooxygenase sthD catalyzes the hydroxylation of C-15 to afford the final metabolite stemphyloxin II. This is Trans-enoyl reductase sthE from Phaeosphaeria nodorum (strain SN15 / ATCC MYA-4574 / FGSC 10173) (Glume blotch fungus).